A 465-amino-acid polypeptide reads, in one-letter code: Cysteine--tRNA ligase (465 aa).

A Zn(2+)-binding site is contributed by cysteine 30. Positions 32-42 (PTVYDRAHLGN) match the 'HIGH' region motif. Residues cysteine 213, histidine 238, and glutamate 242 each contribute to the Zn(2+) site. The short motif at 271-275 (KMSKS) is the 'KMSKS' region element. Lysine 274 is an ATP binding site.

The protein belongs to the class-I aminoacyl-tRNA synthetase family. In terms of assembly, monomer. The cofactor is Zn(2+).

It localises to the cytoplasm. It catalyses the reaction tRNA(Cys) + L-cysteine + ATP = L-cysteinyl-tRNA(Cys) + AMP + diphosphate. In Ruegeria pomeroyi (strain ATCC 700808 / DSM 15171 / DSS-3) (Silicibacter pomeroyi), this protein is Cysteine--tRNA ligase.